Consider the following 349-residue polypeptide: MAVSATGFEGFEKRLEISFFETTDFLDPQGKSLRSLTKSQLDEILTPAECTIVSSLTNSFVDSYVLSESSLFVYPYKIIIKTCGTTKLLLSIPHILRLADSLCLTVKSVRYTRGSFIFPGAQSYPHRSFSEEVALLDDYFGKLNAGSKAFVMGGSDNNPQRWHVYSASSTEESAVCDKPVYTLEMCMTGLDNIKASVFFKTNSVSASEMTISSGIRNILPGSEICDFNFEPCGYSMNSIEGDAVSTIHVTPEDGFSYASFETVGYDLKALNFKELVDRVLVCFGPEEFSVAVHANLGTEVLASDCVADVNGYFSQERELEELGLGGSVLYQRFVKTVECCSPKSTLGFC.

Catalysis depends on residues Glu-9 and Glu-12. Glu-68 contacts substrate. Ser-69 (schiff-base intermediate with substrate; via pyruvic acid) is an active-site residue. Ser-69 bears the Pyruvic acid (Ser); by autocatalysis mark. Catalysis depends on Cys-83, which acts as the Proton donor; for catalytic activity. Residues Ser-235 and His-248 each act as proton acceptor; for processing activity in the active site. Substrate is bound at residue Glu-252.

It belongs to the eukaryotic AdoMetDC family. It depends on pyruvate as a cofactor. Post-translationally, is synthesized initially as an inactive proenzyme. Formation of the active enzyme involves a self-maturation process in which the active site pyruvoyl group is generated from an internal serine residue via an autocatalytic post-translational modification. Two non-identical subunits are generated from the proenzyme in this reaction, and the pyruvate is formed at the N-terminus of the alpha chain, which is derived from the carboxyl end of the proenzyme. The post-translation cleavage follows an unusual pathway, termed non-hydrolytic serinolysis, in which the side chain hydroxyl group of the serine supplies its oxygen atom to form the C-terminus of the beta chain, while the remainder of the serine residue undergoes an oxidative deamination to produce ammonia and the pyruvoyl group blocking the N-terminus of the alpha chain.

It catalyses the reaction S-adenosyl-L-methionine + H(+) = S-adenosyl 3-(methylsulfanyl)propylamine + CO2. The protein operates within amine and polyamine biosynthesis; S-adenosylmethioninamine biosynthesis; S-adenosylmethioninamine from S-adenosyl-L-methionine: step 1/1. Functionally, essential for biosynthesis of the polyamines spermidine and spermine. Essential for polyamine homeostasis, and normal plant embryogenesis, growth and development. This chain is S-adenosylmethionine decarboxylase proenzyme 3, found in Arabidopsis thaliana (Mouse-ear cress).